The sequence spans 488 residues: Endoglucanase A (488 aa).

Residues His-59, 63 to 64, Tyr-90, and His-125 each bind substrate; that span reads WY. Catalysis depends on Glu-163, which acts as the Proton donor. Tyr-226 contacts substrate. The active-site Nucleophile is Glu-252. Substrate is bound by residues 258–259, Trp-286, and 291–293; these read AT and KDE. Disordered stretches follow at residues 326–362 and 388–451; these read ESASIPPSDPTPPSDPDPGEPDPTPPSDPGEYPAWDP and EPGA…WDPT. Pro residues-rich tracts occupy residues 332 to 353 and 405 to 416; these read PSDPTPPSDPDPGEPDPTPPSD and PSEPSDPPPPSE. Residues 417-433 are compositionally biased toward acidic residues; sequence PEPDPGEPDPGEPDPGE.

It belongs to the glycosyl hydrolase 5 (cellulase A) family.

The enzyme catalyses Endohydrolysis of (1-&gt;4)-beta-D-glucosidic linkages in cellulose, lichenin and cereal beta-D-glucans.. In Evansella cellulosilytica (strain ATCC 21833 / DSM 2522 / FERM P-1141 / JCM 9156 / N-4) (Bacillus cellulosilyticus), this protein is Endoglucanase A (celA).